The following is a 263-amino-acid chain: Alpha-tubulin N-acetyltransferase 2 (263 aa).

In terms of domain architecture, N-acetyltransferase spans 1 to 181; it reads MEIAFDLSSI…NKYAVFPNFF (181 aa). An acetyl-CoA-binding site is contributed by 115–128; the sequence is FFIVPTEQRSGNGF. Disordered stretches follow at residues 191-224 and 236-263; these read TPRQ…RPRH and FPRG…EPIW. A compositionally biased stretch (low complexity) spans 200 to 212; the sequence is RASSAVSSHTTSR. The segment covering 253–263 has biased composition (basic and acidic residues); sequence LTRDQRHEPIW.

Belongs to the acetyltransferase ATAT1 family.

It catalyses the reaction L-lysyl-[alpha-tubulin] + acetyl-CoA = N(6)-acetyl-L-lysyl-[alpha-tubulin] + CoA + H(+). Its function is as follows. Specifically acetylates 'Lys-40' in alpha-tubulin/mec-12 on the lumenal side of microtubules. Promotes microtubule destabilization and accelerates microtubule dynamics; this activity may be independent of acetylation activity. Acetylates alpha-tubulin with a slow enzymatic rate, due to a catalytic site that is not optimized for acetyl transfer. Enters the microtubule through each end and diffuses quickly throughout the lumen of microtubules. Acetylates only long/old microtubules because of its slow acetylation rate since it does not have time to act on dynamically unstable microtubules before the enzyme is released. Required for the maintenance of touch receptor neurons and possibly other type of neurons involved in locomotion. The protein is Alpha-tubulin N-acetyltransferase 2 (atat-2) of Caenorhabditis briggsae.